Consider the following 487-residue polypeptide: N-succinylglutamate 5-semialdehyde dehydrogenase (487 aa).

G221–G226 serves as a coordination point for NAD(+). Residues E244 and C278 contribute to the active site.

This sequence belongs to the aldehyde dehydrogenase family. AstD subfamily.

It catalyses the reaction N-succinyl-L-glutamate 5-semialdehyde + NAD(+) + H2O = N-succinyl-L-glutamate + NADH + 2 H(+). It functions in the pathway amino-acid degradation; L-arginine degradation via AST pathway; L-glutamate and succinate from L-arginine: step 4/5. Its function is as follows. Catalyzes the NAD-dependent reduction of succinylglutamate semialdehyde into succinylglutamate. The protein is N-succinylglutamate 5-semialdehyde dehydrogenase of Burkholderia thailandensis (strain ATCC 700388 / DSM 13276 / CCUG 48851 / CIP 106301 / E264).